The chain runs to 44 residues: MTSNNPNQPVSYPIFTVRWLSVHALAVPTVFFIGAISAMQFIQR.

Residues 19–35 form a helical membrane-spanning segment; sequence WLSVHALAVPTVFFIGA. A heme-binding site is contributed by histidine 23.

It belongs to the PsbE/PsbF family. As to quaternary structure, heterodimer of an alpha subunit and a beta subunit. PSII is composed of 1 copy each of membrane proteins PsbA, PsbB, PsbC, PsbD, PsbE, PsbF, PsbH, PsbI, PsbJ, PsbK, PsbL, PsbM, PsbT, PsbX, PsbY, PsbZ, Psb30/Ycf12, peripheral proteins PsbO, CyanoQ (PsbQ), PsbU, PsbV and a large number of cofactors. It forms dimeric complexes. Heme b serves as cofactor.

It localises to the cellular thylakoid membrane. In terms of biological role, this b-type cytochrome is tightly associated with the reaction center of photosystem II (PSII). PSII is a light-driven water:plastoquinone oxidoreductase that uses light energy to abstract electrons from H(2)O, generating O(2) and a proton gradient subsequently used for ATP formation. It consists of a core antenna complex that captures photons, and an electron transfer chain that converts photonic excitation into a charge separation. The chain is Cytochrome b559 subunit beta from Rippkaea orientalis (strain PCC 8801 / RF-1) (Cyanothece sp. (strain PCC 8801)).